The chain runs to 235 residues: 2,3,4,5-tetrahydropyridine-2,6-dicarboxylate N-acetyltransferase (235 aa).

Belongs to the transferase hexapeptide repeat family. DapH subfamily.

The enzyme catalyses (S)-2,3,4,5-tetrahydrodipicolinate + acetyl-CoA + H2O = L-2-acetamido-6-oxoheptanedioate + CoA. It participates in amino-acid biosynthesis; L-lysine biosynthesis via DAP pathway; LL-2,6-diaminopimelate from (S)-tetrahydrodipicolinate (acetylase route): step 1/3. Catalyzes the transfer of an acetyl group from acetyl-CoA to tetrahydrodipicolinate. The sequence is that of 2,3,4,5-tetrahydropyridine-2,6-dicarboxylate N-acetyltransferase from Anoxybacillus flavithermus (strain DSM 21510 / WK1).